Reading from the N-terminus, the 354-residue chain is Rhodopsin (354 aa).

Residues 1-36 (MNGTEGPYFYIPMVNTTGIVRSPYDYPQYYLVNPAA) are Extracellular-facing. Residues asparagine 2 and asparagine 15 are each glycosylated (N-linked (GlcNAc...) asparagine). A helical membrane pass occupies residues 37 to 61 (YAALGAYMFFLILVGFPINFLTLYV). Residues 62-73 (TIEHKKLRTPLN) are Cytoplasmic-facing. Residues 74–96 (YILLNLAVANLFMVFGGFTTTMY) form a helical membrane-spanning segment. At 97–110 (TSMHGYFVLGRLGC) the chain is on the extracellular side. Cysteine 110 and cysteine 187 are oxidised to a cystine. The helical transmembrane segment at 111-133 (NLEGFFATLGGEIALWSLVVLAV) threads the bilayer. Residues 134 to 136 (ERW) carry the 'Ionic lock' involved in activated form stabilization motif. The Cytoplasmic segment spans residues 134 to 152 (ERWMVVCKPISNFRFGENH). Residues 153–173 (AIMGLAMTWLMASACAVPPLV) form a helical membrane-spanning segment. The Extracellular segment spans residues 174–202 (GWSRYIPEGMQCSCGVDYYTRAEGFNNES). N-linked (GlcNAc...) asparagine glycosylation is present at asparagine 200. A helical transmembrane segment spans residues 203 to 224 (FVVYMFCCHFMIPLIIVFFCYG). Residues 225–252 (RLLCAVKEAAAAQQESETTQRAEREVTR) lie on the Cytoplasmic side of the membrane. A helical membrane pass occupies residues 253–274 (MVVIMVIAFLVCWLPYASVAWW). Residues 275–286 (IFTHQGSEFGPV) lie on the Extracellular side of the membrane. A helical transmembrane segment spans residues 287–308 (FMTIPAFFAKSSSIYNPMIYIC). Lysine 296 carries the post-translational modification N6-(retinylidene)lysine. The Cytoplasmic segment spans residues 309–354 (MNKQFRNCMITTLCCGKNPFEEEEGASSTASKTEASSVSSSSVSPA). Residues cysteine 322 and cysteine 323 are each lipidated (S-palmitoyl cysteine). The segment at 329–354 (EEEEGASSTASKTEASSVSSSSVSPA) is disordered. Over residues 334–354 (ASSTASKTEASSVSSSSVSPA) the composition is skewed to low complexity.

Belongs to the G-protein coupled receptor 1 family. Opsin subfamily. Phosphorylated on some or all of the serine and threonine residues present in the C-terminal region. Post-translationally, contains one covalently linked retinal chromophore.

It localises to the membrane. It is found in the cell projection. Its subcellular location is the cilium. The protein localises to the photoreceptor outer segment. Photoreceptor required for image-forming vision at low light intensity. While most salt water fish species use retinal as chromophore, most freshwater fish use 3-dehydroretinal, or a mixture of retinal and 3-dehydroretinal. Light-induced isomerization of 11-cis to all-trans retinal triggers a conformational change that activates signaling via G-proteins. Subsequent receptor phosphorylation mediates displacement of the bound G-protein alpha subunit by arrestin and terminates signaling. The chain is Rhodopsin (rho) from Mullus surmuletus (Striped red mullet).